The chain runs to 564 residues: MGSMEQQQPESAAPATEASPEIIFRSKLQDIAITNTLPLHRYCFERLPEVAARPCLIDGATGGVLTYADVDRLSRRLAAALRRAPLGLRRGGVVMSLLRNSPEFVLSFFAASRVGAAVTTANPMSTPHEIESQLAAAGATVVITESMAADKLPSHSHGALTVVLIDERRDGCLHFWDDLMSEDEASPLAGDEDDEKVFDPDDVVALPYSSGTTGLPKGVMLTHRSLSTSVAQQVDGENPNIGLHAGDVILCALPMFHIYSLNTIMMCGLRVGAAIVVMRRFDLAAMMDLVERHRVTIAPLVPPIVVAVAKSEAAAARDLSSVRMVLSGAAPMGKDIEDAFMAKLPGAVLGQGYGMTEAGPVLSMCLAFAKEPFKVKSGACGTVVRNAELKIIDPDTGKSLGRNLPGEICIRGQQIMKGYLNNPEATKNTIDAEGWLHTGDIGYVDDDDEIFIVDRLKEIIKYRGFQVAPAELEALLITHPSIADAAVVGKQIEPEIGEIPVAFVAKTEGSELSEDDVKQFVAKEVIYYKKIREVFFVDKIPKAPSGKILRKELRKQLQHLQQEA.

ATP contacts are provided by serine 209, serine 210, glycine 211, threonine 212, threonine 213, and lysine 217. Positions 259 and 263 each coordinate (E)-4-coumaroyl-AMP. CoA is bound at residue arginine 280. Residues 282–351 (DLAAMMDLVE…AKLPGAVLGQ (70 aa)) form an SBD1 region. (E)-4-coumaroyl-AMP contacts are provided by alanine 329, glutamine 351, glycine 352, threonine 356, and methionine 364. ATP-binding residues include glutamine 351, glycine 352, and threonine 356. The SBD2 stretch occupies residues 352–419 (GYGMTEAGPV…IRGQQIMKGY (68 aa)). 2 residues coordinate ATP: aspartate 440 and arginine 455. Positions 457 and 461 each coordinate (E)-4-coumaroyl-AMP. CoA is bound by residues arginine 463 and glycine 464. Lysine 547 provides a ligand contact to ATP.

This sequence belongs to the ATP-dependent AMP-binding enzyme family. It depends on Mg(2+) as a cofactor. In terms of tissue distribution, expressed in roots, stems, leaf blades and leaf sheaths.

It catalyses the reaction (E)-ferulate + ATP + CoA = (E)-feruloyl-CoA + AMP + diphosphate. It carries out the reaction (E)-4-coumarate + ATP + CoA = (E)-4-coumaroyl-CoA + AMP + diphosphate. The catalysed reaction is (E)-cinnamate + ATP + CoA = (E)-cinnamoyl-CoA + AMP + diphosphate. The enzyme catalyses (E)-caffeate + ATP + CoA = (E)-caffeoyl-CoA + AMP + diphosphate. It catalyses the reaction (E)-ferulate + ATP + H(+) = (E)-feruloyl-AMP + diphosphate. It carries out the reaction (E)-feruloyl-AMP + CoA = (E)-feruloyl-CoA + AMP + H(+). The catalysed reaction is (E)-4-coumarate + ATP + H(+) = (E)-4-coumaroyl-AMP + diphosphate. The enzyme catalyses (E)-4-coumaroyl-AMP + CoA = (E)-4-coumaroyl-CoA + AMP + H(+). It catalyses the reaction (E)-caffeate + ATP + H(+) = (E)-caffeoyl-AMP + diphosphate. It carries out the reaction (E)-caffeoyl-AMP + CoA = (E)-caffeoyl-CoA + AMP + H(+). Its pathway is phytoalexin biosynthesis; 3,4',5-trihydroxystilbene biosynthesis; 3,4',5-trihydroxystilbene from trans-4-coumarate: step 1/2. Involved in the phenylpropanoid metabolism by mediating the activation of a number of hydroxycinnamates for the biosynthesis of monolignols and other phenolic secondary metabolites. Catalyzes the formation of CoA esters of cinnamate, 4-coumarate, caffeate and ferulate. Is more efficient with substrates in the following order: ferulate &gt; 4-coumarate &gt; cinnamate &gt; caffeate. Cannot convert sinapate to its corresponding CoA ester. Follows a two-step reaction mechanism, wherein the carboxylate substrate first undergoes adenylation by ATP, followed by a thioesterification in the presence of CoA to yield the final CoA thioester. The sequence is that of 4-coumarate--CoA ligase 1 from Oryza sativa subsp. japonica (Rice).